The chain runs to 156 residues: Transcription elongation factor GreA (156 aa).

Residues 12–72 adopt a coiled-coil conformation; sequence YKKLEDELST…KEIEHELKYA (61 aa).

The protein belongs to the GreA/GreB family.

Its function is as follows. Necessary for efficient RNA polymerase transcription elongation past template-encoded arresting sites. The arresting sites in DNA have the property of trapping a certain fraction of elongating RNA polymerases that pass through, resulting in locked ternary complexes. Cleavage of the nascent transcript by cleavage factors such as GreA or GreB allows the resumption of elongation from the new 3'terminus. GreA releases sequences of 2 to 3 nucleotides. This chain is Transcription elongation factor GreA, found in Dehalococcoides mccartyi (strain ATCC BAA-2266 / KCTC 15142 / 195) (Dehalococcoides ethenogenes (strain 195)).